The chain runs to 362 residues: sn-glycerol-3-phosphate import ATP-binding protein UgpC (362 aa).

Residues 4 to 235 form the ABC transporter domain; the sequence is LSFRNVKKTY…PASTFVAGFI (232 aa). 37 to 44 contacts ATP; the sequence is GPSGCGKS.

This sequence belongs to the ABC transporter superfamily. sn-glycerol-3-phosphate importer (TC 3.A.1.1.3) family. The complex is composed of two ATP-binding proteins (UgpC), two transmembrane proteins (UgpA and UgpE) and a solute-binding protein (UgpB).

It is found in the cell inner membrane. It catalyses the reaction sn-glycerol 3-phosphate(out) + ATP + H2O = sn-glycerol 3-phosphate(in) + ADP + phosphate + H(+). In terms of biological role, part of the ABC transporter complex UgpBAEC involved in sn-glycerol-3-phosphate (G3P) import. Responsible for energy coupling to the transport system. The sequence is that of sn-glycerol-3-phosphate import ATP-binding protein UgpC from Bordetella parapertussis (strain 12822 / ATCC BAA-587 / NCTC 13253).